Here is a 446-residue protein sequence, read N- to C-terminus: Protein odr-4 homolog (446 aa).

The next 2 helical transmembrane spans lie at Met-81–Lys-101 and Met-424–Phe-444.

The protein belongs to the ODR-4 family.

It localises to the membrane. Functionally, may play a role in the trafficking of a subset of G-protein coupled receptors. This is Protein odr-4 homolog (ODR4) from Gallus gallus (Chicken).